Reading from the N-terminus, the 605-residue chain is Elongation factor 4 (605 aa).

One can recognise a tr-type G domain in the interval 4-186; the sequence is SATRNFCIIA…AIVARVPAPK (183 aa). Residues 16-21 and 133-136 each bind GTP; these read DHGKST and NKID.

This sequence belongs to the TRAFAC class translation factor GTPase superfamily. Classic translation factor GTPase family. LepA subfamily.

The protein resides in the cell membrane. The catalysed reaction is GTP + H2O = GDP + phosphate + H(+). Its function is as follows. Required for accurate and efficient protein synthesis under certain stress conditions. May act as a fidelity factor of the translation reaction, by catalyzing a one-codon backward translocation of tRNAs on improperly translocated ribosomes. Back-translocation proceeds from a post-translocation (POST) complex to a pre-translocation (PRE) complex, thus giving elongation factor G a second chance to translocate the tRNAs correctly. Binds to ribosomes in a GTP-dependent manner. This Dehalococcoides mccartyi (strain ATCC BAA-2266 / KCTC 15142 / 195) (Dehalococcoides ethenogenes (strain 195)) protein is Elongation factor 4.